Here is a 153-residue protein sequence, read N- to C-terminus: Insulin-like growth factor 1 (153 aa).

Residues glycine 49–threonine 77 are b. 3 disulfides stabilise this stretch: cysteine 54–cysteine 96, cysteine 66–cysteine 109, and cysteine 95–cysteine 100. The segment at glycine 78–threonine 89 is c. The a stretch occupies residues glycine 90–alanine 110. The d stretch occupies residues proline 111–alanine 118. Positions arginine 119–methionine 153 are cleaved as a propeptide — e peptide. Positions serine 120–methionine 153 are disordered. The segment covering arginine 125–leucine 138 has biased composition (basic and acidic residues). A compositionally biased stretch (polar residues) spans serine 142 to methionine 153.

It belongs to the insulin family. Forms a ternary complex with IGFR1 and ITGAV:ITGB3. Forms a ternary complex with IGFR1 and ITGA6:ITGB4. Forms a ternary complex with IGFBP3 and ALS.

The protein resides in the secreted. Functionally, the insulin-like growth factors, isolated from plasma, are structurally and functionally related to insulin but have a much higher growth-promoting activity. May be a physiological regulator of [1-14C]-2-deoxy-D-glucose (2DG) transport and glycogen synthesis in osteoblasts. Stimulates glucose transport in bone-derived osteoblastic (PyMS) cells and is effective at much lower concentrations than insulin, not only regarding glycogen and DNA synthesis but also with regard to enhancing glucose uptake. May play a role in synapse maturation. Ca(2+)-dependent exocytosis of IGF1 is required for sensory perception of smell in the olfactory bulb. Acts as a ligand for IGF1R. Binds to the alpha subunit of IGF1R, leading to the activation of the intrinsic tyrosine kinase activity which autophosphorylates tyrosine residues in the beta subunit thus initiating a cascade of down-stream signaling events leading to activation of the PI3K-AKT/PKB and the Ras-MAPK pathways. Binds to integrins ITGAV:ITGB3 and ITGA6:ITGB4. Its binding to integrins and subsequent ternary complex formation with integrins and IGFR1 are essential for IGF1 signaling. Induces the phosphorylation and activation of IGFR1, MAPK3/ERK1, MAPK1/ERK2 and AKT1. As part of the MAPK/ERK signaling pathway, acts as a negative regulator of apoptosis in cardiomyocytes via promotion of STUB1/CHIP-mediated ubiquitination and degradation of ICER-type isoforms of CREM. This chain is Insulin-like growth factor 1, found in Panthera tigris altaica (Siberian tiger).